Here is a 491-residue protein sequence, read N- to C-terminus: MSIKLTEQEQIRLSKLDTYKKLNINPFEKIEKNLNYVYSKDLKEKYSSYSKEELESMDLYFDLYGRITSQRGPFIVIKDYFDKIQLYFNKKEHLDLAELVSNLDLGDIIHAHGKLSKTNTGELVVKIKTLKLLTKVLKPLPDKFHGLSDIEEIYRHRYLDLISNEHSMEVFKKRSKIISLIRKYFDSNMYLEVETPFLSNYISGAAAKPFKTFHNALSQEFTLRIATEIPLKKLLIGGIDRVYEMGRIFRNEGIDTTHNPEFTTIEFYEAYSNLEKMMQRTEELFKLIAKELNLKTLQNKGEEINLEEPFKRVDMIDEVSKATGVDFRNVTLEKALELAKEHGVKLKKYYTVGHIANELFEKLIEKTLVQPTFVMGHPIEISPLTYEASDPRYVERAELFINGKEYANMYTELSSPIEQLKRFEDQLNEKAQGNDESSDIDWDFIEALKYGMPPAGGCGIGIDRLVMLFTEKESIRDVLFFPTLKNKKSQG.

Mg(2+) contacts are provided by E398 and E405.

The protein belongs to the class-II aminoacyl-tRNA synthetase family. As to quaternary structure, homodimer. It depends on Mg(2+) as a cofactor.

The protein resides in the cytoplasm. It carries out the reaction tRNA(Lys) + L-lysine + ATP = L-lysyl-tRNA(Lys) + AMP + diphosphate. This chain is Lysine--tRNA ligase, found in Mycoplasmopsis synoviae (strain 53) (Mycoplasma synoviae).